The primary structure comprises 337 residues: DNA-directed RNA polymerase subunit alpha (337 aa).

The tract at residues 1–233 is alpha N-terminal domain (alpha-NTD); sequence MVREKVTVST…DLFIPFLHIE (233 aa). Residues 265 to 337 form an alpha C-terminal domain (alpha-CTD) region; sequence KKIALKSIFI…FVIDLAKNEF (73 aa).

This sequence belongs to the RNA polymerase alpha chain family. As to quaternary structure, in plastids the minimal PEP RNA polymerase catalytic core is composed of four subunits: alpha, beta, beta', and beta''. When a (nuclear-encoded) sigma factor is associated with the core the holoenzyme is formed, which can initiate transcription.

It is found in the plastid. Its subcellular location is the chloroplast. It carries out the reaction RNA(n) + a ribonucleoside 5'-triphosphate = RNA(n+1) + diphosphate. In terms of biological role, DNA-dependent RNA polymerase catalyzes the transcription of DNA into RNA using the four ribonucleoside triphosphates as substrates. The protein is DNA-directed RNA polymerase subunit alpha of Nicotiana tomentosiformis (Tobacco).